Consider the following 124-residue polypeptide: Chemotaxis protein CheY1 (124 aa).

The region spanning 2-120 (KLLVVDDSST…VLKEKLEVVL (119 aa)) is the Response regulatory domain. Mg(2+) is bound by residues Asp-7, Asp-8, Asp-53, and Asn-55. A 4-aspartylphosphate modification is found at Asp-53.

In terms of assembly, interacts (when phosphorylated) with FliM. The cofactor is Mg(2+). Phosphorylated by CheAY. Dephosphorylated (inactivated) by CheZ.

Its subcellular location is the cytoplasm. Its function is as follows. Chemotactic response regulator protein that modulates the rotation direction of bacterial flagellar motors. Plays an important role in the colonization and infection of Helicobacter pylori. Upon phosphorylation by CheA, interacts with the flagellar motor protein FliM to cause clockwise flagellar rotation and bacterial reversals, as opposed to straight swimming when CheY1 is not phosphorylated. The polypeptide is Chemotaxis protein CheY1 (cheY1) (Helicobacter pylori (strain J99 / ATCC 700824) (Campylobacter pylori J99)).